Reading from the N-terminus, the 136-residue chain is Large ribosomal subunit protein bL19 (136 aa).

A disordered region spans residues 1 to 23 (MEETVNNQETPETSEEETADEET). Over residues 12–23 (ETSEEETADEET) the composition is skewed to acidic residues.

Belongs to the bacterial ribosomal protein bL19 family.

Functionally, this protein is located at the 30S-50S ribosomal subunit interface and may play a role in the structure and function of the aminoacyl-tRNA binding site. The sequence is that of Large ribosomal subunit protein bL19 from Dehalococcoides mccartyi (strain ATCC BAA-2266 / KCTC 15142 / 195) (Dehalococcoides ethenogenes (strain 195)).